Reading from the N-terminus, the 59-residue chain is Large ribosomal subunit protein uL30 (59 aa).

Belongs to the universal ribosomal protein uL30 family. Part of the 50S ribosomal subunit.

The protein is Large ribosomal subunit protein uL30 of Enterococcus faecalis (strain ATCC 700802 / V583).